The following is a 202-amino-acid chain: Orotate phosphoribosyltransferase (202 aa).

5-phospho-alpha-D-ribose 1-diphosphate is bound by residues Arg-94, Lys-98, His-100, and 120 to 128; that span reads EDLISTGGS. Ser-124 lines the orotate pocket.

It belongs to the purine/pyrimidine phosphoribosyltransferase family. PyrE subfamily. In terms of assembly, homodimer. The cofactor is Mg(2+).

The catalysed reaction is orotidine 5'-phosphate + diphosphate = orotate + 5-phospho-alpha-D-ribose 1-diphosphate. It participates in pyrimidine metabolism; UMP biosynthesis via de novo pathway; UMP from orotate: step 1/2. Functionally, catalyzes the transfer of a ribosyl phosphate group from 5-phosphoribose 1-diphosphate to orotate, leading to the formation of orotidine monophosphate (OMP). The chain is Orotate phosphoribosyltransferase from Staphylococcus haemolyticus (strain JCSC1435).